Reading from the N-terminus, the 216-residue chain is Transmembrane protein 125 (216 aa).

The next 4 membrane-spanning stretches (helical) occupy residues Leu32–Leu52, Leu65–Ser85, Ala111–Leu131, and Met144–Leu164.

It is found in the membrane. The sequence is that of Transmembrane protein 125 (Tmem125) from Mus musculus (Mouse).